A 61-amino-acid polypeptide reads, in one-letter code: Large ribosomal subunit protein uL30 (61 aa).

It belongs to the universal ribosomal protein uL30 family. As to quaternary structure, part of the 50S ribosomal subunit.

The protein is Large ribosomal subunit protein uL30 of Saccharophagus degradans (strain 2-40 / ATCC 43961 / DSM 17024).